The chain runs to 431 residues: MSKIVKVIGREIIDSRGNPTVEAEVHLEGGFVGMAAAPSGASTGSREALELRDGDKSRYMGKGVLKAVGAVNGPIAQAVLGKDAKDQAGIDKIMIDLDGTENKSNFGANAILAVSLATAKAAAASKGQALFEHIAELNGTPGKYSMPVPMMNIINGGEHADNNVDIQEFMIQPVGAKSLKEAVRMGSEVFHNLAKVLKAKGMNTAVGDEGGYAPNLGSNAEALAVIAEAVKAAGYELGTDITLAMDCAASEFYKDGKYVLAGEGNKAFTSEEFTHFLEDLTKQYPIVSIEDGLDESDWDGFAYQTKVLGDKIQLVGDDLFVTNTKILKEGIDKGIVNSILIKFNQIGSLTETLAAIKMAKDAGYTAVISHRSGETEDATIADLAVGTAAGQIKTGSMSRSDRVAKYNQLIRIEEALGEKAPYNGRKEIKGQ.

Gln-167 is a (2R)-2-phosphoglycerate binding site. Glu-209 acts as the Proton donor in catalysis. Asp-246, Glu-290, and Asp-317 together coordinate Mg(2+). The (2R)-2-phosphoglycerate site is built by Lys-342, Arg-371, Ser-372, and Lys-393. Lys-342 acts as the Proton acceptor in catalysis.

The protein belongs to the enolase family. In terms of assembly, component of the RNA degradosome, a multiprotein complex involved in RNA processing and mRNA degradation. The cofactor is Mg(2+).

The protein localises to the cytoplasm. The protein resides in the secreted. It is found in the cell surface. It carries out the reaction (2R)-2-phosphoglycerate = phosphoenolpyruvate + H2O. Its pathway is carbohydrate degradation; glycolysis; pyruvate from D-glyceraldehyde 3-phosphate: step 4/5. Its function is as follows. Catalyzes the reversible conversion of 2-phosphoglycerate (2-PG) into phosphoenolpyruvate (PEP). It is essential for the degradation of carbohydrates via glycolysis. This is Enolase from Enterobacter sp. (strain 638).